The primary structure comprises 350 residues: MLTERQLLILETIIRDYTDLGQPIGSKTLQEQLPIRVSSATIRNEMAVLEKQGFITKEHSSSGRIPSLKGYRYYVDNLVKPVKIDSKSVRSIQSLFGNEYRRVDEIIEMSAKILSDLTNYTAITLRPEASDLKLEGFRMVPLGNGQVMVILVASDGSVESQIYNLPNNIDGESLEAVIRLINDKLVGSSLSEVTSKLQELQPLLTKYIEKSDGFIDVFGGILDKAIKEQFYIGGRRNLLNFANGNNLEQIKSLYSLIDDESDKIGGLVDNTTNPHDHHGISVKIGDEMSDRLLLDYSLVSATYNVGSHGRGMIAILGPTNMPYSKMIGLVEVFQKELTKKLIDYYRNFDK.

It belongs to the HrcA family.

In terms of biological role, negative regulator of class I heat shock genes (grpE-dnaK-dnaJ and groELS operons). Prevents heat-shock induction of these operons. This Ligilactobacillus salivarius (strain UCC118) (Lactobacillus salivarius) protein is Heat-inducible transcription repressor HrcA.